A 985-amino-acid polypeptide reads, in one-letter code: MTSSAPGNADGQILAERFVSGPHVRAPDKAEHRLNEWLAELEPSLAASLRALLAKGLPRSILLGIAECSPYLFDLVRADARRFERLLRSEPQAHLAELISRTGREVFAATSEADVMRLLRQLKSEAALLIALCDIGGVWPVMQVTAALTDVAVSAVQMALRYLLRQEAVRGRLAPRDADDPEQGCGLFVLAMGKMGAGELNYSSDIDLIVFFDPEVHSLARDIEPQPFFVRVTQALARLLQSRTADGYVFRVDLRLRPDPASTQVAMSTEAALHYYEREGRTWERAAMIKARICAGDVAAGEAMLAELSPFVWRKHLDFQALTDVHDMKRQMQVYRGHSEIAVEGHNVKVGRGGIREIEFFAQTQQLIAGGRHPELRVRPTLQALGVLTASKWITEQARDELTTAYEFLRRVEHRLQMMADEQIHSLPDDAEGVSRFACFFGYESRERFASDLLFHLNIVQGHYARLFEGDPTGTVSLPPVNYGAGPDEPRLMEHLAGLGFRDPVMVAKTLQQWLAGEYRVFRTEATRTSFTEFLPALIDGLAHADEPDRAVVAFDRFLQALQLGGRLISLLGQNRDLVALVALVLGAAPRLGDMLARQPRLMDGLIDPRFFGAMPDKRELSQRLAATLQDAGTYEEFLDRLRLFGQESLFLIGTRILSGTVSAQQAGTAFADVAEGIVHTVHGLVTERFAAQHGRIKGQETAIIAMGRLGAREMTASSDLDLILLYDFDADEPDSDGERSLQGAHYFARFTQRLISAFTSRTNYGVLYDIDMRLRPSGRAGPLASHLDSFAHYQEREAWTWEHMALTRARVISASPAFRARIEEIIQTALRRPRDPVAIARDVADMRRAIAAEKGEADLWDLKHAAGGMVDIDFVAQYLQLVHAATKPEILDVSSLQVLDHAERLGVLPRADAVILRHAARLYHDLTQILRLCVSDKFKPDQAGEDLLRVLARAGDAPDFSALEARLRETQSEVRRVFTSLLEE.

Positions 1–472 (MTSSAPGNAD…HYARLFEGDP (472 aa)) are adenylyl removase. The segment at 477 to 985 (SLPPVNYGAG…RRVFTSLLEE (509 aa)) is adenylyl transferase.

It belongs to the GlnE family. Mg(2+) is required as a cofactor.

It catalyses the reaction [glutamine synthetase]-O(4)-(5'-adenylyl)-L-tyrosine + phosphate = [glutamine synthetase]-L-tyrosine + ADP. It carries out the reaction [glutamine synthetase]-L-tyrosine + ATP = [glutamine synthetase]-O(4)-(5'-adenylyl)-L-tyrosine + diphosphate. Involved in the regulation of glutamine synthetase GlnA, a key enzyme in the process to assimilate ammonia. When cellular nitrogen levels are high, the C-terminal adenylyl transferase (AT) inactivates GlnA by covalent transfer of an adenylyl group from ATP to specific tyrosine residue of GlnA, thus reducing its activity. Conversely, when nitrogen levels are low, the N-terminal adenylyl removase (AR) activates GlnA by removing the adenylyl group by phosphorolysis, increasing its activity. The regulatory region of GlnE binds the signal transduction protein PII (GlnB) which indicates the nitrogen status of the cell. In Bradyrhizobium sp. (strain BTAi1 / ATCC BAA-1182), this protein is Bifunctional glutamine synthetase adenylyltransferase/adenylyl-removing enzyme.